The sequence spans 551 residues: Cytochrome c oxidase subunit 1 (551 aa).

The chain crosses the membrane as a helical span at residues 29–49 (VIGIQYLVTSFLFFFIGGSFA). His76 contributes to the Fe(II)-heme a binding site. Helical transmembrane passes span 79-99 (IMIFLWIVPAGAAFANYLIPL), 113-133 (AVAFWLTPPGGILLISSFFVG), 156-176 (LWILSLLLVGTSSILGAINFV), 205-225 (LILLSTPVLASALILLSFDLI), 245-265 (LFWFYSHPAVYIMILPFFGVI), 283-303 (IAYSSLAISFLGLIVWAHHMF), 313-333 (MFFMATTMLIAVPTGIKIFSW), 348-368 (MLFAFGFLSSFMIGGLTGVMV), 382-402 (FVVGHFHYVLFGGSAFALFSG), 424-444 (FILTFIGMNLTFMPMHELGLM), and 466-486 (IGAYVLAASTIPFVINVFWSL). Cu cation is bound by residues His251, Tyr255, His300, and His301. Positions 251–255 (HPAVY) form a cross-link, 1'-histidyl-3'-tyrosine (His-Tyr). His386 contacts heme a3. Residue His388 coordinates Fe(II)-heme a.

This sequence belongs to the heme-copper respiratory oxidase family. Cu(2+) serves as cofactor. Requires heme as cofactor.

The protein resides in the cell membrane. The enzyme catalyses 4 Fe(II)-[cytochrome c] + O2 + 8 H(+)(in) = 4 Fe(III)-[cytochrome c] + 2 H2O + 4 H(+)(out). The protein operates within energy metabolism; oxidative phosphorylation. Cytochrome c oxidase is the component of the respiratory chain that catalyzes the reduction of oxygen to water. Subunits 1-3 form the functional core of the enzyme complex. CO I is the catalytic subunit of the enzyme. Electrons originating in cytochrome c are transferred via the copper A center of subunit 2 and heme A of subunit 1 to the bimetallic center formed by heme A3 and copper B. This is Cytochrome c oxidase subunit 1 (ctaD) from Synechocystis sp. (strain ATCC 27184 / PCC 6803 / Kazusa).